A 204-amino-acid polypeptide reads, in one-letter code: Leucyl/phenylalanyl-tRNA--protein transferase (204 aa).

It belongs to the L/F-transferase family.

It is found in the cytoplasm. The enzyme catalyses N-terminal L-lysyl-[protein] + L-leucyl-tRNA(Leu) = N-terminal L-leucyl-L-lysyl-[protein] + tRNA(Leu) + H(+). The catalysed reaction is N-terminal L-arginyl-[protein] + L-leucyl-tRNA(Leu) = N-terminal L-leucyl-L-arginyl-[protein] + tRNA(Leu) + H(+). It carries out the reaction L-phenylalanyl-tRNA(Phe) + an N-terminal L-alpha-aminoacyl-[protein] = an N-terminal L-phenylalanyl-L-alpha-aminoacyl-[protein] + tRNA(Phe). Functionally, functions in the N-end rule pathway of protein degradation where it conjugates Leu, Phe and, less efficiently, Met from aminoacyl-tRNAs to the N-termini of proteins containing an N-terminal arginine or lysine. This chain is Leucyl/phenylalanyl-tRNA--protein transferase, found in Brucella abortus (strain 2308).